We begin with the raw amino-acid sequence, 125 residues long: NADPH-dependent 7-cyano-7-deazaguanine reductase (125 aa).

Catalysis depends on C41, which acts as the Thioimide intermediate. D48 acts as the Proton donor in catalysis. Residues 63–65 (VEL) and 82–83 (HE) contribute to the substrate site.

Belongs to the GTP cyclohydrolase I family. QueF type 1 subfamily.

The protein resides in the cytoplasm. The catalysed reaction is 7-aminomethyl-7-carbaguanine + 2 NADP(+) = 7-cyano-7-deazaguanine + 2 NADPH + 3 H(+). The protein operates within tRNA modification; tRNA-queuosine biosynthesis. Its function is as follows. Catalyzes the NADPH-dependent reduction of 7-cyano-7-deazaguanine (preQ0) to 7-aminomethyl-7-deazaguanine (preQ1). In Sulfurimonas denitrificans (strain ATCC 33889 / DSM 1251) (Thiomicrospira denitrificans (strain ATCC 33889 / DSM 1251)), this protein is NADPH-dependent 7-cyano-7-deazaguanine reductase.